Consider the following 125-residue polypeptide: Small ribosomal subunit protein uS12c (125 aa).

The segment at 104–125 (ASGVKDRKQGRSKYGGKRPKGD) is disordered. The segment covering 113 to 125 (GRSKYGGKRPKGD) has biased composition (basic residues).

The protein belongs to the universal ribosomal protein uS12 family. As to quaternary structure, part of the 30S ribosomal subunit.

The protein localises to the plastid. It is found in the chloroplast. In terms of biological role, with S4 and S5 plays an important role in translational accuracy. Located at the interface of the 30S and 50S subunits. This chain is Small ribosomal subunit protein uS12c (rps12), found in Emiliania huxleyi (Coccolithophore).